A 1039-amino-acid polypeptide reads, in one-letter code: Beta-galactosidase (1039 aa).

Residues Asn-103 and Asp-201 each contribute to the substrate site. Asp-201 lines the Na(+) pocket. 3 residues coordinate Mg(2+): Glu-415, His-417, and Glu-460. Residues Glu-460 and 536-539 (EYAH) each bind substrate. Residue Glu-460 is the Proton donor of the active site. The active-site Nucleophile is Glu-536. Asn-596 contributes to the Mg(2+) binding site. Na(+)-binding residues include Phe-600 and Asn-603. Substrate-binding residues include Asn-603 and Trp-1012.

This sequence belongs to the glycosyl hydrolase 2 family. As to quaternary structure, homotetramer. It depends on Mg(2+) as a cofactor. The cofactor is Na(+).

The catalysed reaction is Hydrolysis of terminal non-reducing beta-D-galactose residues in beta-D-galactosides.. Inhibited by zinc, copper and nickel ions. Activated by 2-mercaptoethanol and inhibited by EDTA in vitro. The protein is Beta-galactosidase (lacZ) of Pseudoalteromonas haloplanktis (Alteromonas haloplanktis).